We begin with the raw amino-acid sequence, 156 residues long: ATP synthase subunit b (156 aa).

A helical membrane pass occupies residues 7–27; sequence LIGQTVAFIIFVWFCMKFVWP.

Belongs to the ATPase B chain family. In terms of assembly, F-type ATPases have 2 components, F(1) - the catalytic core - and F(0) - the membrane proton channel. F(1) has five subunits: alpha(3), beta(3), gamma(1), delta(1), epsilon(1). F(0) has three main subunits: a(1), b(2) and c(10-14). The alpha and beta chains form an alternating ring which encloses part of the gamma chain. F(1) is attached to F(0) by a central stalk formed by the gamma and epsilon chains, while a peripheral stalk is formed by the delta and b chains.

The protein resides in the cell inner membrane. Its function is as follows. F(1)F(0) ATP synthase produces ATP from ADP in the presence of a proton or sodium gradient. F-type ATPases consist of two structural domains, F(1) containing the extramembraneous catalytic core and F(0) containing the membrane proton channel, linked together by a central stalk and a peripheral stalk. During catalysis, ATP synthesis in the catalytic domain of F(1) is coupled via a rotary mechanism of the central stalk subunits to proton translocation. Functionally, component of the F(0) channel, it forms part of the peripheral stalk, linking F(1) to F(0). This Shewanella baltica (strain OS155 / ATCC BAA-1091) protein is ATP synthase subunit b.